The primary structure comprises 227 residues: Enolase-phosphatase E1 (227 aa).

This sequence belongs to the HAD-like hydrolase superfamily. MasA/MtnC family. Monomer. Mg(2+) is required as a cofactor.

It carries out the reaction 5-methylsulfanyl-2,3-dioxopentyl phosphate + H2O = 1,2-dihydroxy-5-(methylsulfanyl)pent-1-en-3-one + phosphate. It participates in amino-acid biosynthesis; L-methionine biosynthesis via salvage pathway; L-methionine from S-methyl-5-thio-alpha-D-ribose 1-phosphate: step 3/6. Its pathway is amino-acid biosynthesis; L-methionine biosynthesis via salvage pathway; L-methionine from S-methyl-5-thio-alpha-D-ribose 1-phosphate: step 4/6. Functionally, bifunctional enzyme that catalyzes the enolization of 2,3-diketo-5-methylthiopentyl-1-phosphate (DK-MTP-1-P) into the intermediate 2-hydroxy-3-keto-5-methylthiopentenyl-1-phosphate (HK-MTPenyl-1-P), which is then dephosphorylated to form the acireductone 1,2-dihydroxy-3-keto-5-methylthiopentene (DHK-MTPene). This chain is Enolase-phosphatase E1, found in Pseudomonas fluorescens (strain Pf0-1).